The following is a 176-amino-acid chain: Large ribosomal subunit protein uL10 (176 aa).

Belongs to the universal ribosomal protein uL10 family. Part of the ribosomal stalk of the 50S ribosomal subunit. The N-terminus interacts with L11 and the large rRNA to form the base of the stalk. The C-terminus forms an elongated spine to which L12 dimers bind in a sequential fashion forming a multimeric L10(L12)X complex.

In terms of biological role, forms part of the ribosomal stalk, playing a central role in the interaction of the ribosome with GTP-bound translation factors. The protein is Large ribosomal subunit protein uL10 of Natranaerobius thermophilus (strain ATCC BAA-1301 / DSM 18059 / JW/NM-WN-LF).